The primary structure comprises 342 residues: Anthranilate phosphoribosyltransferase (342 aa).

5-phospho-alpha-D-ribose 1-diphosphate-binding positions include glycine 90, glycine 93 to aspartate 94, threonine 98, asparagine 100 to threonine 103, lysine 118 to serine 126, and alanine 130. Glycine 90 serves as a coordination point for anthranilate. Serine 102 provides a ligand contact to Mg(2+). Residue asparagine 121 participates in anthranilate binding. Arginine 176 provides a ligand contact to anthranilate. 2 residues coordinate Mg(2+): aspartate 234 and glutamate 235.

It belongs to the anthranilate phosphoribosyltransferase family. Homodimer. Mg(2+) serves as cofactor.

It carries out the reaction N-(5-phospho-beta-D-ribosyl)anthranilate + diphosphate = 5-phospho-alpha-D-ribose 1-diphosphate + anthranilate. It functions in the pathway amino-acid biosynthesis; L-tryptophan biosynthesis; L-tryptophan from chorismate: step 2/5. Functionally, catalyzes the transfer of the phosphoribosyl group of 5-phosphorylribose-1-pyrophosphate (PRPP) to anthranilate to yield N-(5'-phosphoribosyl)-anthranilate (PRA). The sequence is that of Anthranilate phosphoribosyltransferase from Mannheimia succiniciproducens (strain KCTC 0769BP / MBEL55E).